The primary structure comprises 590 residues: Acetolactate synthase large subunit (590 aa).

Glutamate 61 serves as a coordination point for thiamine diphosphate. FAD is bound by residues arginine 163, histidine 271–arginine 292, and aspartate 314–aspartate 333. The thiamine pyrophosphate binding stretch occupies residues glutamine 405–tryptophan 484. The Mg(2+) site is built by aspartate 455 and asparagine 482.

It belongs to the TPP enzyme family. Dimer of large and small chains. Requires Mg(2+) as cofactor. It depends on thiamine diphosphate as a cofactor.

Its subcellular location is the plastid. It localises to the chloroplast. It carries out the reaction 2 pyruvate + H(+) = (2S)-2-acetolactate + CO2. Its pathway is amino-acid biosynthesis; L-isoleucine biosynthesis; L-isoleucine from 2-oxobutanoate: step 1/4. It participates in amino-acid biosynthesis; L-valine biosynthesis; L-valine from pyruvate: step 1/4. This chain is Acetolactate synthase large subunit (ilvB), found in Pyropia yezoensis (Susabi-nori).